A 60-amino-acid polypeptide reads, in one-letter code: Large ribosomal subunit protein bL33 (60 aa).

This sequence belongs to the bacterial ribosomal protein bL33 family.

The chain is Large ribosomal subunit protein bL33 from Chlorobium phaeovibrioides (strain DSM 265 / 1930) (Prosthecochloris vibrioformis (strain DSM 265)).